The primary structure comprises 157 residues: MDNSIHDELFQAIQQFALKRDKRVWQKVQIPSIGISSQHHDHLKKDWTLTQLHIVSCIHTSQNVNNSFLASRLHISKAAVSKAVHALLKHNIITVTKKPGNKKEIFYTLTDSGRKLAALHEQLHEKAKEQYKQLFNEFSIDDLKTVTAFFNLWIKYM.

The HTH marR-type domain occupies 6-157 (HDELFQAIQQ…AFFNLWIKYM (152 aa)). Residues 66–89 (NSFLASRLHISKAAVSKAVHALLK) constitute a DNA-binding region (H-T-H motif).

It is found in the cytoplasm. This is an uncharacterized protein from Bacillus subtilis (strain 168).